The following is a 515-amino-acid chain: Iroquois-class homeodomain protein IRX-4 (515 aa).

The homeobox; TALE-type DNA-binding region spans 144–205 (GTRRKNATRE…NARRRLKKEN (62 aa)). 3 disordered regions span residues 205–258 (NKMT…ELEL), 278–307 (TPFQ…STTL), and 398–425 (GPTG…RHQD). Residues 214–223 (KCADEKRPYG) are compositionally biased toward basic and acidic residues. Residues 224–236 (EGEEEEAGEEESR) are compositionally biased toward acidic residues. Basic and acidic residues predominate over residues 237–257 (EEPLKSAKSEGHAGKDDKELE). The segment covering 399 to 419 (PTGVSATTPASSPAVTAPSGA) has biased composition (low complexity).

It belongs to the TALE/IRO homeobox family. As to quaternary structure, interacts with the vitamin D receptor VDR but doesn't affect its transactivation activity. As to expression, expressed in the developing central nervous system, skin, and vibrissae, but predominantly expressed in the cardiac ventricles of the developing heart. Not expressed in the developing metanephric kidney or adult kidney.

The protein resides in the nucleus. Functionally, likely to be an important mediator of ventricular differentiation during cardiac development. This is Iroquois-class homeodomain protein IRX-4 (Irx4) from Mus musculus (Mouse).